Here is a 584-residue protein sequence, read N- to C-terminus: N(6)-adenosine-methyltransferase subunit METTL3 (584 aa).

2 disordered regions span residues M1–P65 and K162–V221. Positions R187–S204 are enriched in polar residues. The Nuclear localization signal motif lies at D213–K220. S-adenosyl-L-methionine-binding positions include D381 to I382 and D399. Residues P400–T414 form a gate loop 1 region. Interaction with METTL14 stretches follow at residues D454–E458 and Q468–K484. Residues Q466 to G483 form an interphase loop region. A positively charged region required for RNA-binding region spans residues R469–H482. The interval V511–D519 is gate loop 2. S-adenosyl-L-methionine contacts are provided by residues K517, R540 to N543, and N553 to Q554.

The protein belongs to the MT-A70-like family. In terms of assembly, heterodimer; heterodimerizes with mettl14 to form an antiparallel heterodimer that constitutes an active methyltransferase. Component of the WMM complex, a N6-methyltransferase complex composed of a catalytic subcomplex, named MAC, and of an associated subcomplex, named MACOM. The MAC subcomplex is composed of mettl3 and mettl14. As to expression, expressed in the hemato-vascular system: enriched in sorted endothelial cells and haemogenic endothelium.

Its subcellular location is the nucleus. It localises to the nucleus speckle. It is found in the cytoplasm. The enzyme catalyses an adenosine in mRNA + S-adenosyl-L-methionine = an N(6)-methyladenosine in mRNA + S-adenosyl-L-homocysteine + H(+). The METTL3-METTL14 heterodimer forms a N6-methyltransferase complex that methylates adenosine residues at the N(6) position of some RNAs and regulates various processes such as the circadian clock, differentiation of embryonic and hematopoietic stem cells, cortical neurogenesis, response to DNA damage, differentiation of T-cells and primary miRNA processing. In the heterodimer formed with mettl14, mettl3 constitutes the catalytic core. N6-methyladenosine (m6A), which takes place at the 5'-[AG]GAC-3' consensus sites of some mRNAs, plays a role in mRNA stability, processing and translation efficiency. M6A is also involved in hematopoietic stem cells specification: m6A methylation and subsequent destabilization of mRNAs, such as notch1a, leads to decreased Notch signaling, promoting endothelial to hematopoietic transition. M6A also takes place in other RNA molecules, such as primary miRNA (pri-miRNAs). Mediates methylation of pri-miRNAs. This is N(6)-adenosine-methyltransferase subunit METTL3 from Danio rerio (Zebrafish).